Here is a 128-residue protein sequence, read N- to C-terminus: Small ribosomal subunit protein uS11 (128 aa).

This sequence belongs to the universal ribosomal protein uS11 family. Part of the 30S ribosomal subunit. Interacts with proteins S7 and S18. Binds to IF-3.

Functionally, located on the platform of the 30S subunit, it bridges several disparate RNA helices of the 16S rRNA. Forms part of the Shine-Dalgarno cleft in the 70S ribosome. In Synechococcus sp. (strain JA-3-3Ab) (Cyanobacteria bacterium Yellowstone A-Prime), this protein is Small ribosomal subunit protein uS11.